A 532-amino-acid chain; its full sequence is Type 2 DNA topoisomerase 6 subunit B (532 aa).

Residues Asn-41, Asp-75, 96–97 (SK), 105–112 (GMYGLGVK), and Lys-427 each bind ATP.

It belongs to the TOP6B family. Homodimer. Heterotetramer of two Top6A and two Top6B chains.

The enzyme catalyses ATP-dependent breakage, passage and rejoining of double-stranded DNA.. Functionally, relaxes both positive and negative superturns and exhibits a strong decatenase activity. This Sulfurisphaera tokodaii (strain DSM 16993 / JCM 10545 / NBRC 100140 / 7) (Sulfolobus tokodaii) protein is Type 2 DNA topoisomerase 6 subunit B.